Reading from the N-terminus, the 359-residue chain is Peptide chain release factor 1 (359 aa).

Glutamine 233 is modified (N5-methylglutamine).

The protein belongs to the prokaryotic/mitochondrial release factor family. In terms of processing, methylated by PrmC. Methylation increases the termination efficiency of RF1.

Its subcellular location is the cytoplasm. Functionally, peptide chain release factor 1 directs the termination of translation in response to the peptide chain termination codons UAG and UAA. In Orientia tsutsugamushi (strain Ikeda) (Rickettsia tsutsugamushi), this protein is Peptide chain release factor 1.